The following is a 228-amino-acid chain: 5'-methylthioadenosine/S-adenosylhomocysteine nucleosidase (228 aa).

Glutamate 11 serves as the catalytic Proton acceptor. Residues glycine 77, isoleucine 151, and 172 to 173 (ME) contribute to the substrate site. Aspartate 196 serves as the catalytic Proton donor.

Belongs to the PNP/UDP phosphorylase family. MtnN subfamily.

It carries out the reaction S-adenosyl-L-homocysteine + H2O = S-(5-deoxy-D-ribos-5-yl)-L-homocysteine + adenine. It catalyses the reaction S-methyl-5'-thioadenosine + H2O = 5-(methylsulfanyl)-D-ribose + adenine. The enzyme catalyses 5'-deoxyadenosine + H2O = 5-deoxy-D-ribose + adenine. It participates in amino-acid biosynthesis; L-methionine biosynthesis via salvage pathway; S-methyl-5-thio-alpha-D-ribose 1-phosphate from S-methyl-5'-thioadenosine (hydrolase route): step 1/2. In terms of biological role, catalyzes the irreversible cleavage of the glycosidic bond in both 5'-methylthioadenosine (MTA) and S-adenosylhomocysteine (SAH/AdoHcy) to adenine and the corresponding thioribose, 5'-methylthioribose and S-ribosylhomocysteine, respectively. Also cleaves 5'-deoxyadenosine, a toxic by-product of radical S-adenosylmethionine (SAM) enzymes, into 5-deoxyribose and adenine. The protein is 5'-methylthioadenosine/S-adenosylhomocysteine nucleosidase of Staphylococcus saprophyticus subsp. saprophyticus (strain ATCC 15305 / DSM 20229 / NCIMB 8711 / NCTC 7292 / S-41).